The following is a 367-amino-acid chain: Carbamoyl-phosphate synthase (367 aa).

Residues Lys-111–Ala-296 form the ATP-grasp domain. Lys-137–Ser-186 provides a ligand contact to ATP. Residues Asp-253, Glu-267, and Asn-269 each contribute to the Mg(2+) site. Residues Asp-253, Glu-267, and Asn-269 each coordinate Mn(2+).

This sequence belongs to the small carbamoyl-phosphate synthase family. Forms homodimers and homotetramers (dimers of dimers). Requires Mg(2+) as cofactor. Mn(2+) serves as cofactor.

It carries out the reaction hydrogencarbonate + NH4(+) + 2 ATP = carbamoyl phosphate + 2 ADP + phosphate + 2 H(+). Its function is as follows. Catalyzes the synthesis of carbamoyl phosphate from ATP, ammonium and bicarbonate. Proceeds via a three-step mechanism, i.e. the phosphorylation of hydrogencarbonate to carboxyphosphate, a nucleophilic attack of ammonia on carboxyphosphate yielding carbamate, and the phosphorylation of carbamate forming carbamoyl phosphate. In M.smithii, the predominant archaeon in the human gut, one function of this enzyme may be to sequester ammonia, a scarce nutrient in the intestine which is the major source of nitrogen in M.smithii for the biosynthesis of nucleotides, amino acids, and many other metabolites. The chain is Carbamoyl-phosphate synthase from Methanobrevibacter smithii (strain ATCC 35061 / DSM 861 / OCM 144 / PS).